We begin with the raw amino-acid sequence, 221 residues long: Serine/arginine-rich splicing factor 2 (221 aa).

An N-acetylserine modification is found at S2. Position 2 is a phosphoserine (S2). Positions 14-92 (TSLKVDNLTY…RELRVQMARY (79 aa)) constitute an RRM domain. T22 and T25 each carry phosphothreonine. S26 carries the phosphoserine modification. The residue at position 52 (K52) is an N6-acetyllysine. The interval 92 to 221 (YGRPPDSHHS…SPEEEGAVSS (130 aa)) is disordered. Composition is skewed to basic residues over residues 117 to 171 (RRSR…RSKS) and 179 to 189 (SRSRSRSRSRS). Residues S189, S191, S204, S206, S208, S212, and S220 each carry the phosphoserine modification.

The protein belongs to the splicing factor SR family. As to quaternary structure, interacts with CCNL1 and CCNL2. Interacts with SCAF11. Interacts with ZRSR2/U2AF1-RS2. Interacts with CCDC55 (via C-terminus). In vitro, self-associates and binds SRSF1/SFRS1 (ASF/SF2), SNRNP70 and U2AF1 but not U2AF2. Binds SREK1/SFRS12. Interacts with BRDT. Post-translationally, extensively phosphorylated on serine residues in the RS domain. Phosphorylated by SRPK2 and this causes its redistribution from the nuclear speckle to nucleoplasm and controls cell fate decision in response to cisplatin treatment. KAT5/TIP60 inhibits its phosphorylation by preventing SRPK2 nuclear translocation. Acetylation on Lys-52 by KAT5/TIP60 promotes its proteasomal degradation. This effect is counterbalanced by HDAC6, which positively controls SRSF2 protein level by deacetylating it and preventing its proteasomal degradation. As to expression, expressed in all the tissues examined; liver, kidney, spleen, heart, lung and brain.

The protein resides in the nucleus. It is found in the nucleoplasm. The protein localises to the nucleus speckle. Its function is as follows. Necessary for the splicing of pre-mRNA. It is required for formation of the earliest ATP-dependent splicing complex and interacts with spliceosomal components bound to both the 5'- and 3'-splice sites during spliceosome assembly. It also is required for ATP-dependent interactions of both U1 and U2 snRNPs with pre-mRNA. Can bind to the myelin basic protein (MBP) gene MB3 regulatory region and increase transcription of the mbp promoter in cells derived from the CNS. The phosphorylated form (by SRPK2) is required for cellular apoptosis in response to cisplatin treatment. In Mus musculus (Mouse), this protein is Serine/arginine-rich splicing factor 2 (Srsf2).